The sequence spans 659 residues: DNA mismatch repair protein MutL (659 aa).

It belongs to the DNA mismatch repair MutL/HexB family.

In terms of biological role, this protein is involved in the repair of mismatches in DNA. It is required for dam-dependent methyl-directed DNA mismatch repair. May act as a 'molecular matchmaker', a protein that promotes the formation of a stable complex between two or more DNA-binding proteins in an ATP-dependent manner without itself being part of a final effector complex. The chain is DNA mismatch repair protein MutL from Ligilactobacillus salivarius (strain UCC118) (Lactobacillus salivarius).